Reading from the N-terminus, the 225-residue chain is ATP-dependent dethiobiotin synthetase BioD (225 aa).

12–17 (EIGKTY) is a binding site for ATP. Residue threonine 16 coordinates Mg(2+). Lysine 37 is a catalytic residue. Serine 41 provides a ligand contact to substrate. ATP-binding positions include aspartate 55, 122-125 (EGVG), and 182-183 (SE). Positions 55 and 122 each coordinate Mg(2+).

The protein belongs to the dethiobiotin synthetase family. As to quaternary structure, homodimer. The cofactor is Mg(2+).

Its subcellular location is the cytoplasm. The enzyme catalyses (7R,8S)-7,8-diammoniononanoate + CO2 + ATP = (4R,5S)-dethiobiotin + ADP + phosphate + 3 H(+). It functions in the pathway cofactor biosynthesis; biotin biosynthesis; biotin from 7,8-diaminononanoate: step 1/2. In terms of biological role, catalyzes a mechanistically unusual reaction, the ATP-dependent insertion of CO2 between the N7 and N8 nitrogen atoms of 7,8-diaminopelargonic acid (DAPA, also called 7,8-diammoniononanoate) to form a ureido ring. This Methylobacterium nodulans (strain LMG 21967 / CNCM I-2342 / ORS 2060) protein is ATP-dependent dethiobiotin synthetase BioD.